Consider the following 210-residue polypeptide: Small ribosomal subunit protein uS4 (210 aa).

The S4 RNA-binding domain occupies R99–A161.

The protein belongs to the universal ribosomal protein uS4 family. In terms of assembly, part of the 30S ribosomal subunit. Contacts protein S5. The interaction surface between S4 and S5 is involved in control of translational fidelity.

Its function is as follows. One of the primary rRNA binding proteins, it binds directly to 16S rRNA where it nucleates assembly of the body of the 30S subunit. In terms of biological role, with S5 and S12 plays an important role in translational accuracy. The sequence is that of Small ribosomal subunit protein uS4 from Solibacter usitatus (strain Ellin6076).